Reading from the N-terminus, the 728-residue chain is Putative auxin response factor 20 (728 aa).

The segment at residues 119 to 233 (FFEKQLSPAD…ELLVGVRRAP (115 aa)) is a DNA-binding region (TF-B3 1). 2 stretches are compositionally biased toward low complexity: residues 665–689 (PQGSDEEAAAATTSTAHAGDATTSA) and 700–712 (ASSSSSSAPIIPS). The disordered stretch occupies residues 665-728 (PQGSDEEAAA…IVNPRDGSQG (64 aa)).

The protein belongs to the ARF family. In terms of assembly, homo and heterodimers.

It localises to the nucleus. Its function is as follows. Auxin response factors (ARFs) are transcriptional factors that bind specifically to the DNA sequence 5'-TGTCTC-3' found in the auxin-responsive promoter elements (AuxREs). The polypeptide is Putative auxin response factor 20 (ARF20) (Oryza sativa subsp. japonica (Rice)).